The chain runs to 171 residues: Small ribosomal subunit protein uS5 (171 aa).

The S5 DRBM domain maps to 16–79; that stretch reads LIEKIVFINR…ERARKDMALV (64 aa).

It belongs to the universal ribosomal protein uS5 family. Part of the 30S ribosomal subunit. Contacts proteins S4 and S8.

With S4 and S12 plays an important role in translational accuracy. In terms of biological role, located at the back of the 30S subunit body where it stabilizes the conformation of the head with respect to the body. This chain is Small ribosomal subunit protein uS5, found in Desulfotalea psychrophila (strain LSv54 / DSM 12343).